A 785-amino-acid polypeptide reads, in one-letter code: Solute carrier family 45 member 4 (785 aa).

Residues 1–43 (MKMAPQNADSESMQVQELPVPLPDPQKPRDPEAETQEETTSEG) form a disordered region. The next 6 membrane-spanning stretches (helical) occupy residues 64-84 (EFCYAMETALVTPILLQIGLP), 87-107 (YYSLTWFLSPVLGLIFTPLIG), 124-144 (ILALCVGVLIGVALFLNGSAI), 156-176 (PIGIVLTVLGVVVLDFSADAT), 197-217 (LNIHAFSAGLGGAIGYVLGGL), and 234-254 (VLFFFAAVIFSVSVALHLFSI). Disordered stretches follow at residues 259–309 (YSPQ…VQSE) and 401–430 (KVPNGRGSPPINSLSRSKVDLKPSVTSGSM). Serine 442 and serine 472 each carry phosphoserine. Residues 478–505 (DLQQRQRSRHRNQSGATASSGDTESEEG) are disordered. The span at 490-499 (QSGATASSGD) shows a compositional bias: low complexity. A Phosphoserine modification is found at serine 502. Helical transmembrane passes span 525-545 (LMWLCLCHLLTWFSVIAEAVF), 577-597 (MGCWGLVIYAATGAICSALLQ), 609-629 (IIYMLGTLGFSVGTAVMAMFP), 631-651 (VYVAMVTISTMGVVSMSISYC), 683-703 (ILSCQVYISQILVASALGGVV), and 709-729 (IVVIPIVASVGSFLGFLTATF). A disordered region spans residues 741–772 (KEEQKGLSSGPAGEGEGGAGSEKPTVLKLSRK). Residue serine 749 is modified to Phosphoserine.

The protein belongs to the glycoside-pentoside-hexuronide (GPH) cation symporter transporter (TC 2.A.2) family. As to expression, ubiquitously expressed.

It is found in the membrane. It carries out the reaction sucrose(out) + H(+)(out) = sucrose(in) + H(+)(in). Functionally, proton-associated sucrose transporter. May be able to transport also glucose and fructose. In Mus musculus (Mouse), this protein is Solute carrier family 45 member 4 (Slc45a4).